Here is a 481-residue protein sequence, read N- to C-terminus: ATP synthase subunit beta (481 aa).

167-174 (GGAGVGKT) lines the ATP pocket.

Belongs to the ATPase alpha/beta chains family. As to quaternary structure, F-type ATPases have 2 components, CF(1) - the catalytic core - and CF(0) - the membrane proton channel. CF(1) has five subunits: alpha(3), beta(3), gamma(1), delta(1), epsilon(1). CF(0) has three main subunits: a(1), b(2) and c(9-12). The alpha and beta chains form an alternating ring which encloses part of the gamma chain. CF(1) is attached to CF(0) by a central stalk formed by the gamma and epsilon chains, while a peripheral stalk is formed by the delta and b chains.

It is found in the cell membrane. The catalysed reaction is ATP + H2O + 4 H(+)(in) = ADP + phosphate + 5 H(+)(out). Produces ATP from ADP in the presence of a proton gradient across the membrane. The catalytic sites are hosted primarily by the beta subunits. In Corynebacterium diphtheriae (strain ATCC 700971 / NCTC 13129 / Biotype gravis), this protein is ATP synthase subunit beta.